We begin with the raw amino-acid sequence, 492 residues long: PTS system N-acetylmuramic acid-specific EIIBC component (492 aa).

Residues 1–89 (MAKINQSVIA…NELLNSSTPT (89 aa)) form the PTS EIIB type-1 domain. Cys-28 acts as the Phosphocysteine intermediate; for EIIB activity in catalysis. A PTS EIIC type-1 domain is found at 123–487 (TKFATIFTPL…KKIEVLKADV (365 aa)). The next 10 membrane-spanning stretches (helical) occupy residues 125-145 (FATI…LLGF), 167-187 (IIGY…ILIG), 193-213 (AFGG…LSYN), 227-247 (FFGY…AAIL), 265-285 (MILT…IFIM), 311-331 (ILAG…FVPV), 344-364 (LFPI…ALYV), 378-398 (GAII…VTLP), 403-423 (FITA…IAYL), and 450-470 (IFVG…SGFV).

It localises to the cell inner membrane. It catalyses the reaction N-acetyl-beta-D-muramate(out) + N(pros)-phospho-L-histidyl-[protein] = N-acetyl-beta-D-muramate 6-phosphate(in) + L-histidyl-[protein]. Functionally, the phosphoenolpyruvate-dependent sugar phosphotransferase system (sugar PTS), a major carbohydrate active transport system, catalyzes the phosphorylation of incoming sugar substrates concomitantly with their translocation across the cell membrane. This system is involved in N-acetylmuramic acid (MurNAc) transport, yielding cytoplasmic MurNAc-6-P. Is also able to take up anhydro-N-acetylmuramic acid (anhMurNAc), but cannot phosphorylate the carbon 6, probably because of the 1,6-anhydro ring. This chain is PTS system N-acetylmuramic acid-specific EIIBC component (murP), found in Photorhabdus laumondii subsp. laumondii (strain DSM 15139 / CIP 105565 / TT01) (Photorhabdus luminescens subsp. laumondii).